The following is a 721-amino-acid chain: Fatty acid oxidation complex subunit alpha (721 aa).

Positions 1–190 are enoyl-CoA hydratase/isomerase; the sequence is MIYEGKAITV…KVGVVDAIVA (190 aa). Residue Asp-297 participates in substrate binding. Residues 312–721 form a 3-hydroxyacyl-CoA dehydrogenase region; the sequence is RDVKQAAVLG…SFFGQASSEV (410 aa). Residues Met-325, Asp-344, 401–403, Lys-408, and Ser-430 contribute to the NAD(+) site; that span reads VVE. The active-site For 3-hydroxyacyl-CoA dehydrogenase activity is His-451. Residue Asn-454 participates in NAD(+) binding. Residues Asn-501 and Tyr-660 each contribute to the substrate site.

The protein in the N-terminal section; belongs to the enoyl-CoA hydratase/isomerase family. In the C-terminal section; belongs to the 3-hydroxyacyl-CoA dehydrogenase family. As to quaternary structure, heterotetramer of two alpha chains (FadB) and two beta chains (FadA).

It catalyses the reaction a (3S)-3-hydroxyacyl-CoA + NAD(+) = a 3-oxoacyl-CoA + NADH + H(+). The catalysed reaction is a (3S)-3-hydroxyacyl-CoA = a (2E)-enoyl-CoA + H2O. It carries out the reaction a 4-saturated-(3S)-3-hydroxyacyl-CoA = a (3E)-enoyl-CoA + H2O. The enzyme catalyses (3S)-3-hydroxybutanoyl-CoA = (3R)-3-hydroxybutanoyl-CoA. It catalyses the reaction a (3Z)-enoyl-CoA = a 4-saturated (2E)-enoyl-CoA. The catalysed reaction is a (3E)-enoyl-CoA = a 4-saturated (2E)-enoyl-CoA. It functions in the pathway lipid metabolism; fatty acid beta-oxidation. Functionally, involved in the aerobic and anaerobic degradation of long-chain fatty acids via beta-oxidation cycle. Catalyzes the formation of 3-oxoacyl-CoA from enoyl-CoA via L-3-hydroxyacyl-CoA. It can also use D-3-hydroxyacyl-CoA and cis-3-enoyl-CoA as substrate. In Pseudomonas syringae pv. tomato (strain ATCC BAA-871 / DC3000), this protein is Fatty acid oxidation complex subunit alpha.